We begin with the raw amino-acid sequence, 237 residues long: Orotidine 5'-phosphate decarboxylase (237 aa).

Substrate is bound by residues Asp11, Lys34, 61–70, Thr124, Arg186, Gln195, Gly215, and Arg216; that span reads DLKLHDIPNT. Lys63 acts as the Proton donor in catalysis.

This sequence belongs to the OMP decarboxylase family. Type 1 subfamily. Homodimer.

It carries out the reaction orotidine 5'-phosphate + H(+) = UMP + CO2. The protein operates within pyrimidine metabolism; UMP biosynthesis via de novo pathway; UMP from orotate: step 2/2. Catalyzes the decarboxylation of orotidine 5'-monophosphate (OMP) to uridine 5'-monophosphate (UMP). The polypeptide is Orotidine 5'-phosphate decarboxylase (Lactococcus lactis subsp. cremoris (strain MG1363)).